We begin with the raw amino-acid sequence, 358 residues long: UDP-N-acetylglucosamine--N-acetylmuramyl-(pentapeptide) pyrophosphoryl-undecaprenol N-acetylglucosamine transferase (358 aa).

Positions 166, 196, and 291 each coordinate UDP-N-acetyl-alpha-D-glucosamine.

This sequence belongs to the glycosyltransferase 28 family. MurG subfamily.

The protein localises to the cell membrane. It carries out the reaction Mur2Ac(oyl-L-Ala-gamma-D-Glu-L-Lys-D-Ala-D-Ala)-di-trans,octa-cis-undecaprenyl diphosphate + UDP-N-acetyl-alpha-D-glucosamine = beta-D-GlcNAc-(1-&gt;4)-Mur2Ac(oyl-L-Ala-gamma-D-Glu-L-Lys-D-Ala-D-Ala)-di-trans,octa-cis-undecaprenyl diphosphate + UDP + H(+). Its pathway is cell wall biogenesis; peptidoglycan biosynthesis. In terms of biological role, cell wall formation. Catalyzes the transfer of a GlcNAc subunit on undecaprenyl-pyrophosphoryl-MurNAc-pentapeptide (lipid intermediate I) to form undecaprenyl-pyrophosphoryl-MurNAc-(pentapeptide)GlcNAc (lipid intermediate II). In Staphylococcus saprophyticus subsp. saprophyticus (strain ATCC 15305 / DSM 20229 / NCIMB 8711 / NCTC 7292 / S-41), this protein is UDP-N-acetylglucosamine--N-acetylmuramyl-(pentapeptide) pyrophosphoryl-undecaprenol N-acetylglucosamine transferase.